A 234-amino-acid polypeptide reads, in one-letter code: Thiamine-phosphate synthase (234 aa).

4-amino-2-methyl-5-(diphosphooxymethyl)pyrimidine is bound by residues Gln52 to Lys56 and Asn84. 2 residues coordinate Mg(2+): Asp85 and Asp104. Ser123 provides a ligand contact to 4-amino-2-methyl-5-(diphosphooxymethyl)pyrimidine. Ser150–Thr152 contributes to the 2-[(2R,5Z)-2-carboxy-4-methylthiazol-5(2H)-ylidene]ethyl phosphate binding site. 4-amino-2-methyl-5-(diphosphooxymethyl)pyrimidine is bound at residue Lys153. 2-[(2R,5Z)-2-carboxy-4-methylthiazol-5(2H)-ylidene]ethyl phosphate is bound at residue Gly180.

The protein belongs to the thiamine-phosphate synthase family. Requires Mg(2+) as cofactor.

It catalyses the reaction 2-[(2R,5Z)-2-carboxy-4-methylthiazol-5(2H)-ylidene]ethyl phosphate + 4-amino-2-methyl-5-(diphosphooxymethyl)pyrimidine + 2 H(+) = thiamine phosphate + CO2 + diphosphate. It carries out the reaction 2-(2-carboxy-4-methylthiazol-5-yl)ethyl phosphate + 4-amino-2-methyl-5-(diphosphooxymethyl)pyrimidine + 2 H(+) = thiamine phosphate + CO2 + diphosphate. The enzyme catalyses 4-methyl-5-(2-phosphooxyethyl)-thiazole + 4-amino-2-methyl-5-(diphosphooxymethyl)pyrimidine + H(+) = thiamine phosphate + diphosphate. Its pathway is cofactor biosynthesis; thiamine diphosphate biosynthesis; thiamine phosphate from 4-amino-2-methyl-5-diphosphomethylpyrimidine and 4-methyl-5-(2-phosphoethyl)-thiazole: step 1/1. Functionally, condenses 4-methyl-5-(beta-hydroxyethyl)thiazole monophosphate (THZ-P) and 2-methyl-4-amino-5-hydroxymethyl pyrimidine pyrophosphate (HMP-PP) to form thiamine monophosphate (TMP). In Nitrosospira multiformis (strain ATCC 25196 / NCIMB 11849 / C 71), this protein is Thiamine-phosphate synthase.